We begin with the raw amino-acid sequence, 184 residues long: ATP synthase subunit b, chloroplastic (184 aa).

A helical membrane pass occupies residues 27 to 49; that stretch reads LATNLINLSVVLGVLIFFGKGVL.

This sequence belongs to the ATPase B chain family. In terms of assembly, F-type ATPases have 2 components, F(1) - the catalytic core - and F(0) - the membrane proton channel. F(1) has five subunits: alpha(3), beta(3), gamma(1), delta(1), epsilon(1). F(0) has four main subunits: a(1), b(1), b'(1) and c(10-14). The alpha and beta chains form an alternating ring which encloses part of the gamma chain. F(1) is attached to F(0) by a central stalk formed by the gamma and epsilon chains, while a peripheral stalk is formed by the delta, b and b' chains.

The protein resides in the plastid. It localises to the chloroplast thylakoid membrane. Functionally, f(1)F(0) ATP synthase produces ATP from ADP in the presence of a proton or sodium gradient. F-type ATPases consist of two structural domains, F(1) containing the extramembraneous catalytic core and F(0) containing the membrane proton channel, linked together by a central stalk and a peripheral stalk. During catalysis, ATP synthesis in the catalytic domain of F(1) is coupled via a rotary mechanism of the central stalk subunits to proton translocation. Component of the F(0) channel, it forms part of the peripheral stalk, linking F(1) to F(0). This Helianthus annuus (Common sunflower) protein is ATP synthase subunit b, chloroplastic.